We begin with the raw amino-acid sequence, 482 residues long: BTB/POZ domain-containing protein 6-B (482 aa).

Positions 80 to 150 constitute a BTB domain; the sequence is ADVHFVVGPP…MYSDEIELEA (71 aa).

Interacts with cul3. Interacts (via BTB domain) with zbtb16/plzf. In embryos, expressed in the cranial ganglia.

The protein resides in the cytoplasm. It is found in the nucleus. Functionally, adapter protein for the cul3 E3 ubiquitin-protein ligase complex. Promotes the export of zbtb16/plzf from the nucleus to the cytoplasm and targets zbtb16/plzf for ubiquitination and degradation. Up-regulates neurog1 expression and antagonizes zbtb16/plzf, to promote neurogenesis. The polypeptide is BTB/POZ domain-containing protein 6-B (btbd6b) (Danio rerio (Zebrafish)).